A 254-amino-acid polypeptide reads, in one-letter code: Phytolongin Phyl1.1 (254 aa).

One can recognise a Longin domain in the interval 12 to 113 (CVSRDNQILY…TAMIGSINVE (102 aa)). The tract at residues 138-173 (ELKSSNLGEQSEGSNSTKAPLLGRLSKQEKKKGKDH) is disordered. Positions 145-155 (GEQSEGSNSTK) are enriched in polar residues. Residues 226-246 (IVLAIDAAICLTLFGIWLAIC) form a helical; Anchor for type IV membrane protein membrane-spanning segment.

It belongs to the synaptobrevin family.

The protein localises to the membrane. In terms of biological role, non-SNARE longin protein involved in membrane-trafficking machinery. This chain is Phytolongin Phyl1.1, found in Arabidopsis thaliana (Mouse-ear cress).